Reading from the N-terminus, the 241-residue chain is ATP synthase subunit a (241 aa).

5 helical membrane passes run 30-50 (GQVFLTSWILLGALLVFISVG), 91-111 (FIGTLFLFVFVSNWGGALIPW), 128-148 (INTTIALALLVSLSYFYAGLS), 193-213 (LVVGVLVFLVPLVLPIPVMFL), and 214-234 (GLFTSAIQALIFATLAAYYIG).

It belongs to the ATPase A chain family. F-type ATPases have 2 components, CF(1) - the catalytic core - and CF(0) - the membrane proton channel. CF(1) has five subunits: alpha(3), beta(3), gamma(1), delta(1), epsilon(1). CF(0) has four main subunits: a, b, b' and c.

Its subcellular location is the cellular thylakoid membrane. In terms of biological role, key component of the proton channel; it plays a direct role in the translocation of protons across the membrane. The protein is ATP synthase subunit a of Prochlorococcus marinus subsp. pastoris (strain CCMP1986 / NIES-2087 / MED4).